The primary structure comprises 110 residues: Iron-sulfur cluster assembly protein CyaY (110 aa).

This sequence belongs to the frataxin family.

Functionally, involved in iron-sulfur (Fe-S) cluster assembly. May act as a regulator of Fe-S biogenesis. The sequence is that of Iron-sulfur cluster assembly protein CyaY from Pseudomonas fluorescens (strain ATCC BAA-477 / NRRL B-23932 / Pf-5).